A 104-amino-acid chain; its full sequence is Large ribosomal subunit protein uL24 (104 aa).

The protein belongs to the universal ribosomal protein uL24 family. In terms of assembly, part of the 50S ribosomal subunit.

One of two assembly initiator proteins, it binds directly to the 5'-end of the 23S rRNA, where it nucleates assembly of the 50S subunit. In terms of biological role, one of the proteins that surrounds the polypeptide exit tunnel on the outside of the subunit. The chain is Large ribosomal subunit protein uL24 from Caulobacter vibrioides (strain ATCC 19089 / CIP 103742 / CB 15) (Caulobacter crescentus).